Consider the following 456-residue polypeptide: Bifunctional protein GlmU (456 aa).

Positions 1-228 (MPQNTLNIVI…SHLAAGVNNK (228 aa)) are pyrophosphorylase. UDP-N-acetyl-alpha-D-glucosamine contacts are provided by residues 11 to 14 (LAAG), lysine 25, glutamine 75, 80 to 81 (GT), 102 to 104 (YGD), glycine 138, glutamate 153, asparagine 168, and asparagine 226. Position 104 (aspartate 104) interacts with Mg(2+). Asparagine 226 contributes to the Mg(2+) binding site. A linker region spans residues 229-249 (LQLAELERIFQTGQAQELLKA). The N-acetyltransferase stretch occupies residues 250–456 (GVTLHDPARF…GWVRPEKDKQ (207 aa)). UDP-N-acetyl-alpha-D-glucosamine contacts are provided by arginine 332 and lysine 350. The active-site Proton acceptor is histidine 362. The UDP-N-acetyl-alpha-D-glucosamine site is built by tyrosine 365 and asparagine 376. Acetyl-CoA-binding positions include alanine 379, 385-386 (NY), serine 404, alanine 422, and arginine 439.

It in the N-terminal section; belongs to the N-acetylglucosamine-1-phosphate uridyltransferase family. The protein in the C-terminal section; belongs to the transferase hexapeptide repeat family. As to quaternary structure, homotrimer. It depends on Mg(2+) as a cofactor.

It localises to the cytoplasm. The enzyme catalyses alpha-D-glucosamine 1-phosphate + acetyl-CoA = N-acetyl-alpha-D-glucosamine 1-phosphate + CoA + H(+). It catalyses the reaction N-acetyl-alpha-D-glucosamine 1-phosphate + UTP + H(+) = UDP-N-acetyl-alpha-D-glucosamine + diphosphate. Its pathway is nucleotide-sugar biosynthesis; UDP-N-acetyl-alpha-D-glucosamine biosynthesis; N-acetyl-alpha-D-glucosamine 1-phosphate from alpha-D-glucosamine 6-phosphate (route II): step 2/2. It participates in nucleotide-sugar biosynthesis; UDP-N-acetyl-alpha-D-glucosamine biosynthesis; UDP-N-acetyl-alpha-D-glucosamine from N-acetyl-alpha-D-glucosamine 1-phosphate: step 1/1. The protein operates within bacterial outer membrane biogenesis; LPS lipid A biosynthesis. Its function is as follows. Catalyzes the last two sequential reactions in the de novo biosynthetic pathway for UDP-N-acetylglucosamine (UDP-GlcNAc). The C-terminal domain catalyzes the transfer of acetyl group from acetyl coenzyme A to glucosamine-1-phosphate (GlcN-1-P) to produce N-acetylglucosamine-1-phosphate (GlcNAc-1-P), which is converted into UDP-GlcNAc by the transfer of uridine 5-monophosphate (from uridine 5-triphosphate), a reaction catalyzed by the N-terminal domain. This Neisseria meningitidis serogroup C (strain 053442) protein is Bifunctional protein GlmU.